A 269-amino-acid polypeptide reads, in one-letter code: tRNA pseudouridine synthase A (269 aa).

The Nucleophile role is filled by aspartate 51. Tyrosine 109 contributes to the substrate binding site.

The protein belongs to the tRNA pseudouridine synthase TruA family. In terms of assembly, homodimer.

It catalyses the reaction uridine(38/39/40) in tRNA = pseudouridine(38/39/40) in tRNA. Functionally, formation of pseudouridine at positions 38, 39 and 40 in the anticodon stem and loop of transfer RNAs. In Histophilus somni (strain 2336) (Haemophilus somnus), this protein is tRNA pseudouridine synthase A.